We begin with the raw amino-acid sequence, 356 residues long: S-adenosylmethionine:tRNA ribosyltransferase-isomerase (356 aa).

Belongs to the QueA family. In terms of assembly, monomer.

The protein resides in the cytoplasm. The catalysed reaction is 7-aminomethyl-7-carbaguanosine(34) in tRNA + S-adenosyl-L-methionine = epoxyqueuosine(34) in tRNA + adenine + L-methionine + 2 H(+). It participates in tRNA modification; tRNA-queuosine biosynthesis. In terms of biological role, transfers and isomerizes the ribose moiety from AdoMet to the 7-aminomethyl group of 7-deazaguanine (preQ1-tRNA) to give epoxyqueuosine (oQ-tRNA). The polypeptide is S-adenosylmethionine:tRNA ribosyltransferase-isomerase (Escherichia coli (strain ATCC 8739 / DSM 1576 / NBRC 3972 / NCIMB 8545 / WDCM 00012 / Crooks)).